Consider the following 500-residue polypeptide: Cytochrome P450 2D16 (500 aa).

Position 249 is a phosphoserine (serine 249). Cysteine 446 is a binding site for heme.

It belongs to the cytochrome P450 family. It depends on heme as a cofactor. In terms of tissue distribution, expressed at high levels in the inner zone of the adrenal cortex.

The protein resides in the endoplasmic reticulum membrane. Its subcellular location is the microsome membrane. It carries out the reaction an organic molecule + reduced [NADPH--hemoprotein reductase] + O2 = an alcohol + oxidized [NADPH--hemoprotein reductase] + H2O + H(+). In terms of biological role, cytochromes P450 are a group of heme-thiolate monooxygenases. In liver microsomes, this enzyme is involved in an NADPH-dependent electron transport pathway. It oxidizes a variety of structurally unrelated compounds, including steroids, fatty acids, and xenobiotics. This Cavia porcellus (Guinea pig) protein is Cytochrome P450 2D16 (CYP2D16).